We begin with the raw amino-acid sequence, 360 residues long: Peptide chain release factor 1 (360 aa).

Residue Q235 is modified to N5-methylglutamine.

Belongs to the prokaryotic/mitochondrial release factor family. In terms of processing, methylated by PrmC. Methylation increases the termination efficiency of RF1.

The protein resides in the cytoplasm. Peptide chain release factor 1 directs the termination of translation in response to the peptide chain termination codons UAG and UAA. This is Peptide chain release factor 1 from Mannheimia succiniciproducens (strain KCTC 0769BP / MBEL55E).